Here is a 62-residue protein sequence, read N- to C-terminus: Large ribosomal subunit protein eL37 (62 aa).

4 residues coordinate Zn(2+): cysteine 20, cysteine 23, cysteine 35, and cysteine 38. A C4-type zinc finger spans residues 20–38 (CRRCGRRSYNVAKGYCAAC).

The protein belongs to the eukaryotic ribosomal protein eL37 family. Requires Zn(2+) as cofactor.

Binds to the 23S rRNA. This Aeropyrum pernix (strain ATCC 700893 / DSM 11879 / JCM 9820 / NBRC 100138 / K1) protein is Large ribosomal subunit protein eL37 (rpl37e).